A 449-amino-acid polypeptide reads, in one-letter code: 23S rRNA (uracil(1939)-C(5))-methyltransferase RlmD (449 aa).

Residues 15 to 73 enclose the TRAM domain; it reads KAIPAKNLTVTVTSLDPFGQGVARHEGKTVFVTGVLPGEQAEVQLTEDKRQFSHAKLKR. [4Fe-4S] cluster-binding residues include Cys86, Cys92, Cys95, and Cys173. 6 residues coordinate S-adenosyl-L-methionine: Gln276, Phe305, Asn310, Glu326, Asn353, and Asp374. The active-site Nucleophile is Cys400.

It belongs to the class I-like SAM-binding methyltransferase superfamily. RNA M5U methyltransferase family. RlmD subfamily.

It catalyses the reaction uridine(1939) in 23S rRNA + S-adenosyl-L-methionine = 5-methyluridine(1939) in 23S rRNA + S-adenosyl-L-homocysteine + H(+). In terms of biological role, catalyzes the formation of 5-methyl-uridine at position 1939 (m5U1939) in 23S rRNA. In Pectobacterium carotovorum subsp. carotovorum (strain PC1), this protein is 23S rRNA (uracil(1939)-C(5))-methyltransferase RlmD.